A 303-amino-acid chain; its full sequence is Putative S-adenosyl-L-methionine-dependent methyltransferase Mb1931c (303 aa).

S-adenosyl-L-methionine is bound by residues aspartate 129 and 158-159 (DL).

The protein belongs to the UPF0677 family.

In terms of biological role, exhibits S-adenosyl-L-methionine-dependent methyltransferase activity. This is Putative S-adenosyl-L-methionine-dependent methyltransferase Mb1931c from Mycobacterium bovis (strain ATCC BAA-935 / AF2122/97).